The chain runs to 69 residues: Sec-independent protein translocase protein TatA (69 aa).

A helical transmembrane segment spans residues 1-21; it reads MFGLGGQELVLILLIVLLLFG. The segment covering 47-63 has biased composition (basic and acidic residues); the sequence is EEEFNKSMDDNPKKEKA. A disordered region spans residues 47–69; it reads EEEFNKSMDDNPKKEKATTASKS.

It belongs to the TatA/E family. Forms a complex with TatC.

The protein resides in the cell inner membrane. Its function is as follows. Part of the twin-arginine translocation (Tat) system that transports large folded proteins containing a characteristic twin-arginine motif in their signal peptide across membranes. TatA could form the protein-conducting channel of the Tat system. The sequence is that of Sec-independent protein translocase protein TatA from Chlorobium chlorochromatii (strain CaD3).